The following is a 262-amino-acid chain: High-affinity zinc uptake system membrane protein ZnuB (262 aa).

7 helical membrane-spanning segments follow: residues 8–28 (GWLA…FIVW), 54–74 (INSF…LAWL), 84–104 (TVLN…ISLI), 129–149 (ITIS…WHSI), 179–199 (FTIA…LLII), 215–235 (VIIA…LSVF), and 238–254 (TPAS…LCLI).

This sequence belongs to the ABC-3 integral membrane protein family.

The protein localises to the cell membrane. Involved in the high-affinity zinc uptake transport system. In Buchnera aphidicola subsp. Acyrthosiphon pisum (strain APS) (Acyrthosiphon pisum symbiotic bacterium), this protein is High-affinity zinc uptake system membrane protein ZnuB (znuB).